Consider the following 72-residue polypeptide: Large ribosomal subunit protein uL29 (72 aa).

This sequence belongs to the universal ribosomal protein uL29 family.

This chain is Large ribosomal subunit protein uL29 (rpmC), found in Chlamydia muridarum (strain MoPn / Nigg).